The chain runs to 180 residues: MKNLEQTWRSILDEFHQQANLREGHIVVIGCSTSEVAGRRIGTSGSEQIAEAVYKGLEELRDRTGIALAFQCCEHLNRALVVEEETAKAYRLPVVFAIPVPKAGGSMASYAYKHMKAPVLVEQIEADAGIDIGDTFIGMHLKPVAVPVRVSQKQLGEAHVTLARTRPKLIGGVRAVYEAE.

The protein belongs to the UPF0340 family.

In Bacillus licheniformis (strain ATCC 14580 / DSM 13 / JCM 2505 / CCUG 7422 / NBRC 12200 / NCIMB 9375 / NCTC 10341 / NRRL NRS-1264 / Gibson 46), this protein is UPF0340 protein BLi03936/BL03990.